Consider the following 133-residue polypeptide: MPSVDIDASQWQKLTQSREKQTTVITPLGMMMLEIQGELELPKDFASLARRDSPNEGRFSEQDGETLIRFGSLQIDGERATLFVGKKQRLLGKVTKLDVPMGIMHFNSKDNKVELVDVMKYKVIFKDRPLPIM.

The protein belongs to the CTF8 family. Component of the CTF18-RFC complex, which consists of CTF18, CTF8, DSCC1, RFC2, RFC3, RFC4 and RFC5.

The protein localises to the nucleus. Functionally, essential for the fidelity of chromosome transmission. Required for the DNA replication block checkpoint. Component of the RFC-like complex CTF18-RFC which is required for efficient establishment of chromosome cohesion during S-phase and may load or unload POL30/PCNA. During a clamp loading circle, the RFC:clamp complex binds to DNA and the recognition of the double-stranded/single-stranded junction stimulates ATP hydrolysis by RFC. The complex presumably provides bipartite ATP sites in which one subunit supplies a catalytic site for hydrolysis of ATP bound to the neighboring subunit. Dissociation of RFC from the clamp leaves the clamp encircling DNA. The polypeptide is Chromosome transmission fidelity protein 8 (CTF8) (Saccharomyces cerevisiae (strain ATCC 204508 / S288c) (Baker's yeast)).